The following is a 91-amino-acid chain: MARSLANAKIQSVFGSEKLSNAVFRRGFAAAAKTALDGSVSTAEMKKRAGEASSEKAPWVPDPKTGYYRPETVSEEIDPAELRAILLNNKQ.

The tract at residues Lys47–Thr72 is disordered.

This sequence belongs to the LEA type 3 family.

The protein localises to the cytoplasm. It is found in the nucleus. The sequence is that of Late embryogenis abundant protein 2 from Arabidopsis thaliana (Mouse-ear cress).